The sequence spans 544 residues: Sphingosine-1-phosphate lyase (544 aa).

The Lumenal portion of the chain corresponds to 1 to 29 (MDSFSYSSMKSMLIQARGSLNSRLSEFEP). Residues 30 to 50 (LVLLLVPLVSLFLAQIIGSVF) form a helical; Signal-anchor for type III membrane protein membrane-spanning segment. The Cytoplasmic segment spans residues 51–544 (GVVHEKGLKA…LLVSFMDSQY (494 aa)). K349 carries the post-translational modification N6-(pyridoxal phosphate)lysine.

It belongs to the group II decarboxylase family. Sphingosine-1-phosphate lyase subfamily. Requires pyridoxal 5'-phosphate as cofactor. In terms of tissue distribution, expressed in the peripheral parts of leaves and the bases of trichomes.

It localises to the endoplasmic reticulum membrane. It carries out the reaction sphinganine 1-phosphate = hexadecanal + phosphoethanolamine. The protein operates within lipid metabolism; sphingolipid metabolism. Functionally, cleaves phosphorylated sphingoid bases (PSBs), such as sphingosine-1-phosphate, into fatty aldehydes and phosphoethanolamine. May play a minor role in maintenance of sphingolipid metabolism during normal plant development and growth, but be required for maintaining sphingoid long chain bases (LCB) and their phosphorylated derivatives (LCB-P) levels when sphingolipid metabolism is perturbed. May play a role in dehydration stress. The chain is Sphingosine-1-phosphate lyase (DPL1) from Arabidopsis thaliana (Mouse-ear cress).